A 754-amino-acid chain; its full sequence is Protein tyrosine phosphatase domain-containing protein 1 (754 aa).

One can recognise a Tyrosine-protein phosphatase domain in the interval 82–253 (YSSWVTDNIL…LTPLRNIFSC (172 aa)). The active-site Phosphocysteine intermediate is cysteine 190. 2 positions are modified to phosphoserine: serine 392 and serine 394. Polar residues predominate over residues 487 to 498 (SGAFSADVSGSH). The disordered stretch occupies residues 487–554 (SGAFSADVSG…PRSPLDCGSS (68 aa)). Phosphoserine is present on serine 547.

The protein belongs to the protein-tyrosine phosphatase family. Non-receptor class PTPDC1 subfamily.

In terms of biological role, may play roles in cilia formation and/or maintenance. This chain is Protein tyrosine phosphatase domain-containing protein 1 (PTPDC1), found in Homo sapiens (Human).